Here is a 647-residue protein sequence, read N- to C-terminus: Chaperone protein DnaK (647 aa).

Threonine 198 is modified (phosphothreonine; by autocatalysis). The disordered stretch occupies residues 606–634 (GASAEGMDPNQFQQGADNAGESNQADDDV). Residues 615 to 628 (NQFQQGADNAGESN) show a composition bias toward polar residues.

It belongs to the heat shock protein 70 family.

Its function is as follows. Acts as a chaperone. The polypeptide is Chaperone protein DnaK (Psychrobacter cryohalolentis (strain ATCC BAA-1226 / DSM 17306 / VKM B-2378 / K5)).